Here is an 885-residue protein sequence, read N- to C-terminus: Alanine--tRNA ligase (885 aa).

His-571, His-575, Cys-674, and His-678 together coordinate Zn(2+).

It belongs to the class-II aminoacyl-tRNA synthetase family. The cofactor is Zn(2+).

The protein localises to the cytoplasm. It carries out the reaction tRNA(Ala) + L-alanine + ATP = L-alanyl-tRNA(Ala) + AMP + diphosphate. Functionally, catalyzes the attachment of alanine to tRNA(Ala) in a two-step reaction: alanine is first activated by ATP to form Ala-AMP and then transferred to the acceptor end of tRNA(Ala). Also edits incorrectly charged Ser-tRNA(Ala) and Gly-tRNA(Ala) via its editing domain. This chain is Alanine--tRNA ligase, found in Clavibacter sepedonicus (Clavibacter michiganensis subsp. sepedonicus).